We begin with the raw amino-acid sequence, 211 residues long: Ribosomal RNA small subunit methyltransferase G (211 aa).

Residues glycine 76, leucine 81, 127-128 (VE), and arginine 142 each bind S-adenosyl-L-methionine.

It belongs to the methyltransferase superfamily. RNA methyltransferase RsmG family.

Its subcellular location is the cytoplasm. It carries out the reaction guanosine(527) in 16S rRNA + S-adenosyl-L-methionine = N(7)-methylguanosine(527) in 16S rRNA + S-adenosyl-L-homocysteine. Specifically methylates the N7 position of guanine in position 527 of 16S rRNA. The protein is Ribosomal RNA small subunit methyltransferase G of Vibrio campbellii (strain ATCC BAA-1116).